The following is a 695-amino-acid chain: Sodium-dependent phosphate transport protein 2B (695 aa).

Residues 1–44 (MAPWPELENAHPNPNKFIEGASGPQSSIPDKDKGTSKTNDSGTP) form a disordered region. At 1–90 (MAPWPELENA…KWSERDSKGK (90 aa)) the chain is on the cytoplasmic side. Residues 91–111 (ILCIFQGIGKFILLLGFLYLF) traverse the membrane as a helical segment. Topologically, residues 112 to 136 (VCSLDVLSSAFQLVGGKMAGQFFSN) are extracellular. Residues 137–157 (NSIMSNPVAGLVIGVLVTVMV) form a helical membrane-spanning segment. Residues 158 to 213 (QSSSTSSSIIVSMVASSLLSVRAAIPIIMGANIGTSITNTIVALMQAGDRNEFRRA) are Cytoplasmic-facing. The chain crosses the membrane as a helical span at residues 214–234 (FAGATVHDFFNWLSVLVLLPL). Topologically, residues 235 to 363 (EAATHYLEKL…FVNFSLPDLA (129 aa)) are extracellular. N-linked (GlcNAc...) asparagine glycosylation is found at Asn-295, Asn-313, Asn-321, Asn-340, and Asn-356. Cys-303 and Cys-350 are joined by a disulfide. The chain crosses the membrane as a helical span at residues 364–384 (VGIILLTVSLLILCGCLIMIV). The Cytoplasmic segment spans residues 385–408 (KLLGSVLRGQVATVIKKTLNTDFP). A helical transmembrane segment spans residues 409-429 (FPFAWLTGYLAILVGAGMTFI). Residues 430-486 (VQSSSVFTSAMTPLIGIGVISIERAYPLTLGSNIGTTTTAILAALASPGNTLRSSLQ) are Extracellular-facing. A helical transmembrane segment spans residues 487–507 (IALCHFFFNISGILLWYPIPF). The Cytoplasmic portion of the chain corresponds to 508 to 526 (TRLPIRLAKGLGNISAKYR). A helical transmembrane segment spans residues 527-547 (WFAVFYLIFFFLLTPLTVFGL). At 548-551 (SLAG) the chain is on the extracellular side. Residues 552-572 (WPVLVGVGVPIILLILLVLCL) traverse the membrane as a helical segment. Over 573-695 (RMLQARCPRI…MKALSNTTVF (123 aa)) the chain is Cytoplasmic.

It belongs to the SLC34A transporter family. Highly expressed in the lung, in type II alveolar cells. Moderately expressed in kidney followed by small intestine.

It is found in the apical cell membrane. It carries out the reaction 3 Na(+)(out) + phosphate(out) = 3 Na(+)(in) + phosphate(in). In terms of biological role, involved in actively transporting phosphate into cells via Na(+) cotransport. The chain is Sodium-dependent phosphate transport protein 2B (Slc34a2) from Rattus norvegicus (Rat).